The chain runs to 229 residues: Cytidylate kinase (229 aa).

Residue 12 to 20 (GPSGSGKGT) participates in ATP binding.

This sequence belongs to the cytidylate kinase family. Type 1 subfamily.

It is found in the cytoplasm. It catalyses the reaction CMP + ATP = CDP + ADP. It carries out the reaction dCMP + ATP = dCDP + ADP. The chain is Cytidylate kinase from Pseudomonas fluorescens (strain ATCC BAA-477 / NRRL B-23932 / Pf-5).